Reading from the N-terminus, the 178-residue chain is CD209 antigen-like protein C (178 aa).

An intrachain disulfide couples Cys48 to Cys59. The region spanning 54-169 (VFQGNCYFFS…CTIKKYWICK (116 aa)) is the C-type lectin domain. N-linked (GlcNAc...) asparagine glycosylation is present at Asn70. Intrachain disulfides connect Cys76–Cys168 and Cys147–Cys160. 5 residues coordinate Ca(2+): Glu138, Asn140, Glu145, Asn156, and Asp157.

Its function is as follows. Probable pathogen-recognition receptor. May recognize in a calcium-dependent manner high mannose N-linked oligosaccharides in a variety of pathogen antigens. This Mus musculus (Mouse) protein is CD209 antigen-like protein C (Cd209c).